A 527-amino-acid chain; its full sequence is EGF domain-specific O-linked N-acetylglucosamine transferase (527 aa).

An N-terminal signal peptide occupies residues 1–19 (MLMLLVFGVLLHEVPLSGQ). The Required for optimal activity signature appears at 295 to 297 (DYD). N-linked (GlcNAc...) asparagine glycosylation occurs at N354. Positions 524-527 (HDEL) match the Prevents secretion from ER motif.

It belongs to the glycosyltransferase 61 family.

The protein resides in the endoplasmic reticulum lumen. The enzyme catalyses L-seryl-[protein] + UDP-N-acetyl-alpha-D-glucosamine = 3-O-(N-acetyl-beta-D-glucosaminyl)-L-seryl-[protein] + UDP + H(+). It carries out the reaction L-threonyl-[protein] + UDP-N-acetyl-alpha-D-glucosamine = 3-O-(N-acetyl-beta-D-glucosaminyl)-L-threonyl-[protein] + UDP + H(+). Catalyzes the transfer of a single N-acetylglucosamine from UDP-GlcNAc to a serine or threonine residue in extracellular proteins resulting in their modification with a beta-linked N-acetylglucosamine (O-GlcNAc). Specifically glycosylates the Thr residue located between the fifth and sixth conserved cysteines of folded EGF-like domains. This is EGF domain-specific O-linked N-acetylglucosamine transferase (Eogt) from Rattus norvegicus (Rat).